A 502-amino-acid chain; its full sequence is Probable malate:quinone oxidoreductase (502 aa).

It belongs to the MQO family. FAD serves as cofactor.

It catalyses the reaction (S)-malate + a quinone = a quinol + oxaloacetate. It functions in the pathway carbohydrate metabolism; tricarboxylic acid cycle; oxaloacetate from (S)-malate (quinone route): step 1/1. In Synechococcus sp. (strain CC9605), this protein is Probable malate:quinone oxidoreductase.